Here is a 385-residue protein sequence, read N- to C-terminus: 8-amino-7-oxononanoate synthase (385 aa).

R21 lines the substrate pocket. G108–F109 is a binding site for pyridoxal 5'-phosphate. H133 lines the substrate pocket. Pyridoxal 5'-phosphate contacts are provided by S179, H207, and T233. K236 is subject to N6-(pyridoxal phosphate)lysine. Residue T352 coordinates substrate.

It belongs to the class-II pyridoxal-phosphate-dependent aminotransferase family. BioF subfamily. Homodimer. Pyridoxal 5'-phosphate is required as a cofactor.

It catalyses the reaction 6-carboxyhexanoyl-[ACP] + L-alanine + H(+) = (8S)-8-amino-7-oxononanoate + holo-[ACP] + CO2. It functions in the pathway cofactor biosynthesis; biotin biosynthesis. Its function is as follows. Catalyzes the decarboxylative condensation of pimeloyl-[acyl-carrier protein] and L-alanine to produce 8-amino-7-oxononanoate (AON), [acyl-carrier protein], and carbon dioxide. This chain is 8-amino-7-oxononanoate synthase, found in Salmonella paratyphi B (strain ATCC BAA-1250 / SPB7).